Reading from the N-terminus, the 719-residue chain is Fatty acid oxidation complex subunit alpha (719 aa).

An enoyl-CoA hydratase/isomerase region spans residues 1-190 (MIYQGNRITV…KLGLVDAVVA (190 aa)). Asp-298 provides a ligand contact to substrate. Residues 313-719 (HDINEAAVLG…AAGETFYPKA (407 aa)) form a 3-hydroxyacyl-CoA dehydrogenase region. NAD(+) contacts are provided by residues Met-326, Asp-345, 402-404 (VVE), Lys-409, and Ser-431. Residue His-452 is the For 3-hydroxyacyl-CoA dehydrogenase activity of the active site. Residue Asn-455 participates in NAD(+) binding. A substrate-binding site is contributed by Asn-502.

It in the N-terminal section; belongs to the enoyl-CoA hydratase/isomerase family. The protein in the C-terminal section; belongs to the 3-hydroxyacyl-CoA dehydrogenase family. Heterotetramer of two alpha chains (FadB) and two beta chains (FadA).

The enzyme catalyses a (3S)-3-hydroxyacyl-CoA + NAD(+) = a 3-oxoacyl-CoA + NADH + H(+). It carries out the reaction a (3S)-3-hydroxyacyl-CoA = a (2E)-enoyl-CoA + H2O. It catalyses the reaction a 4-saturated-(3S)-3-hydroxyacyl-CoA = a (3E)-enoyl-CoA + H2O. The catalysed reaction is (3S)-3-hydroxybutanoyl-CoA = (3R)-3-hydroxybutanoyl-CoA. The enzyme catalyses a (3Z)-enoyl-CoA = a 4-saturated (2E)-enoyl-CoA. It carries out the reaction a (3E)-enoyl-CoA = a 4-saturated (2E)-enoyl-CoA. It participates in lipid metabolism; fatty acid beta-oxidation. Involved in the aerobic and anaerobic degradation of long-chain fatty acids via beta-oxidation cycle. Catalyzes the formation of 3-oxoacyl-CoA from enoyl-CoA via L-3-hydroxyacyl-CoA. It can also use D-3-hydroxyacyl-CoA and cis-3-enoyl-CoA as substrate. This chain is Fatty acid oxidation complex subunit alpha, found in Psychrobacter sp. (strain PRwf-1).